The chain runs to 271 residues: Formamidopyrimidine-DNA glycosylase (271 aa).

The active-site Schiff-base intermediate with DNA is P2. The Proton donor role is filled by E3. K57 acts as the Proton donor; for beta-elimination activity in catalysis. Residues H90, R109, and R151 each coordinate DNA. The segment at 236–270 adopts an FPG-type zinc-finger fold; the sequence is MVYGRAGEACVTCKTKLQEIRQSNRSSVFCPSCQQ. R260 functions as the Proton donor; for delta-elimination activity in the catalytic mechanism.

It belongs to the FPG family. In terms of assembly, monomer. Zn(2+) is required as a cofactor.

It carries out the reaction Hydrolysis of DNA containing ring-opened 7-methylguanine residues, releasing 2,6-diamino-4-hydroxy-5-(N-methyl)formamidopyrimidine.. The enzyme catalyses 2'-deoxyribonucleotide-(2'-deoxyribose 5'-phosphate)-2'-deoxyribonucleotide-DNA = a 3'-end 2'-deoxyribonucleotide-(2,3-dehydro-2,3-deoxyribose 5'-phosphate)-DNA + a 5'-end 5'-phospho-2'-deoxyribonucleoside-DNA + H(+). Its function is as follows. Involved in base excision repair of DNA damaged by oxidation or by mutagenic agents. Acts as a DNA glycosylase that recognizes and removes damaged bases. Has a preference for oxidized purines, such as 7,8-dihydro-8-oxoguanine (8-oxoG). Has AP (apurinic/apyrimidinic) lyase activity and introduces nicks in the DNA strand. Cleaves the DNA backbone by beta-delta elimination to generate a single-strand break at the site of the removed base with both 3'- and 5'-phosphates. The protein is Formamidopyrimidine-DNA glycosylase of Colwellia psychrerythraea (strain 34H / ATCC BAA-681) (Vibrio psychroerythus).